The primary structure comprises 162 residues: Probable chorismate pyruvate-lyase (162 aa).

Arg-54, Leu-92, and Glu-149 together coordinate substrate.

This sequence belongs to the UbiC family.

It is found in the cytoplasm. It catalyses the reaction chorismate = 4-hydroxybenzoate + pyruvate. Its pathway is cofactor biosynthesis; ubiquinone biosynthesis. Functionally, removes the pyruvyl group from chorismate, with concomitant aromatization of the ring, to provide 4-hydroxybenzoate (4HB) for the ubiquinone pathway. This is Probable chorismate pyruvate-lyase from Methylococcus capsulatus (strain ATCC 33009 / NCIMB 11132 / Bath).